We begin with the raw amino-acid sequence, 559 residues long: Dihydroxy-acid dehydratase (559 aa).

Cysteine 56 provides a ligand contact to [2Fe-2S] cluster. Aspartate 88 contacts Mg(2+). Cysteine 129 contacts [2Fe-2S] cluster. 2 residues coordinate Mg(2+): aspartate 130 and lysine 131. Lysine 131 bears the N6-carboxylysine mark. A [2Fe-2S] cluster-binding site is contributed by cysteine 198. Mg(2+) is bound at residue glutamate 449. The active-site Proton acceptor is the serine 475.

Belongs to the IlvD/Edd family. As to quaternary structure, homodimer. [2Fe-2S] cluster serves as cofactor. It depends on Mg(2+) as a cofactor.

The enzyme catalyses (2R)-2,3-dihydroxy-3-methylbutanoate = 3-methyl-2-oxobutanoate + H2O. It carries out the reaction (2R,3R)-2,3-dihydroxy-3-methylpentanoate = (S)-3-methyl-2-oxopentanoate + H2O. The protein operates within amino-acid biosynthesis; L-isoleucine biosynthesis; L-isoleucine from 2-oxobutanoate: step 3/4. It participates in amino-acid biosynthesis; L-valine biosynthesis; L-valine from pyruvate: step 3/4. Its function is as follows. Functions in the biosynthesis of branched-chain amino acids. Catalyzes the dehydration of (2R,3R)-2,3-dihydroxy-3-methylpentanoate (2,3-dihydroxy-3-methylvalerate) into 2-oxo-3-methylpentanoate (2-oxo-3-methylvalerate) and of (2R)-2,3-dihydroxy-3-methylbutanoate (2,3-dihydroxyisovalerate) into 2-oxo-3-methylbutanoate (2-oxoisovalerate), the penultimate precursor to L-isoleucine and L-valine, respectively. This is Dihydroxy-acid dehydratase from Ruthia magnifica subsp. Calyptogena magnifica.